A 1628-amino-acid chain; its full sequence is THO complex subunit 2 (1628 aa).

2 stretches are compositionally biased toward basic and acidic residues: residues 1–10 and 1360–1399; these read MTSLPEKDQQ and TDNK…EGNR. 2 disordered regions span residues 1–21 and 1337–1628; these read MTSL…NQKK and VALN…RKIQ. Threonine 1406 and threonine 1408 each carry phosphothreonine. Basic and acidic residues predominate over residues 1411–1429; that stretch reads DIQRSDSKLREDQSRDRTP. The span at 1430 to 1444 shows a compositional bias: polar residues; that stretch reads QSRSFTNENNDNLRS. Positions 1461–1474 are enriched in basic and acidic residues; the sequence is ARREHESQKSDRWR. Over residues 1476–1493 the composition is skewed to low complexity; sequence NGNVNRNPRVSNNNSTNV. The segment covering 1494-1526 has biased composition (basic and acidic residues); that stretch reads SRERSSEANHRTSNDNKRDEVTEGKDKNKRQDI. The span at 1527 to 1550 shows a compositional bias: polar residues; it reads SGESNSRQNNAISRAGRSNGSNRG. The segment covering 1551 to 1560 has biased composition (basic and acidic residues); the sequence is NDSRDADGRR. The residue at position 1577 (serine 1577) is a Phosphoserine. Basic and acidic residues predominate over residues 1581–1628; it reads LREEDERENSRRRARQDDRRDRDSRQQRDRPRDRTSRSAREEKRRKIQ.

This sequence belongs to the THOC2 family. Component of the THO complex. THO associates with DNA and RNA in vitro.

The protein resides in the nucleus. Component the THO subcomplex of the TREX complex, which operates in coupling transcription elongation to mRNA export. The THO complex is recruited to transcribed genes and moves along the gene with the elongating polymerase during transcription. THO is important for stabilizing nascent RNA in the RNA polymerase II elongation complex by preventing formation of DNA:RNA hybrids behind the elongating polymerase. In Schizosaccharomyces pombe (strain 972 / ATCC 24843) (Fission yeast), this protein is THO complex subunit 2 (tho2).